The following is a 422-amino-acid chain: Secernin-3 (422 aa).

A propeptide spanning residues 1 to 5 (MEPCS) is cleaved from the precursor. Residue C6 is part of the active site. C6 is modified (glyoxylic acid (Cys); alternate). C6 bears the Pyruvic acid (Cys); alternate mark.

This sequence belongs to the peptidase C69 family. Secernin subfamily.

Functionally, plays a role in thermal nociception. The sequence is that of Secernin-3 (SCRN3) from Bos taurus (Bovine).